The sequence spans 207 residues: dITP/XTP pyrophosphatase (207 aa).

10–15 (TRNAGK) contributes to the substrate binding site. Mg(2+) contacts are provided by Glu43 and Asp72. Asp72 serves as the catalytic Proton acceptor. Residues Ser73, 161-164 (FGYD), Lys184, and 189-190 (HR) contribute to the substrate site.

Belongs to the HAM1 NTPase family. In terms of assembly, homodimer. Mg(2+) serves as cofactor.

It carries out the reaction XTP + H2O = XMP + diphosphate + H(+). It catalyses the reaction dITP + H2O = dIMP + diphosphate + H(+). The catalysed reaction is ITP + H2O = IMP + diphosphate + H(+). Functionally, pyrophosphatase that catalyzes the hydrolysis of nucleoside triphosphates to their monophosphate derivatives, with a high preference for the non-canonical purine nucleotides XTP (xanthosine triphosphate), dITP (deoxyinosine triphosphate) and ITP. Seems to function as a house-cleaning enzyme that removes non-canonical purine nucleotides from the nucleotide pool, thus preventing their incorporation into DNA/RNA and avoiding chromosomal lesions. The sequence is that of dITP/XTP pyrophosphatase from Nitratidesulfovibrio vulgaris (strain ATCC 29579 / DSM 644 / CCUG 34227 / NCIMB 8303 / VKM B-1760 / Hildenborough) (Desulfovibrio vulgaris).